A 402-amino-acid polypeptide reads, in one-letter code: uncharacterized protein (402 aa).

Helical transmembrane passes span 13–33 (IGVL…VNLA), 68–88 (FFIQ…GMVV), 108–128 (LMAL…GDIL), 149–169 (LLIW…LTSF), 223–243 (LNYF…AAAA), 261–281 (LWMA…VTDK), 283–303 (ICLL…VVYL), 327–347 (YLMQ…GLYG), and 353–373 (AGVL…HLWL).

The protein localises to the cell membrane. Functionally, involved in transport. This is an uncharacterized protein from Bacillus subtilis (strain 168).